The chain runs to 350 residues: Phosphotriesterase-related protein (350 aa).

Residues histidine 24, histidine 26, glutamate 170, histidine 202, histidine 231, and aspartate 299 each coordinate a divalent metal cation.

The protein belongs to the metallo-dependent hydrolases superfamily. Phosphotriesterase family. It depends on a divalent metal cation as a cofactor.

The protein is Phosphotriesterase-related protein of Nematostella vectensis (Starlet sea anemone).